The chain runs to 158 residues: uncharacterized protein (158 aa).

The tract at residues M1 to A26 is disordered.

This is an uncharacterized protein from Homo sapiens (Human).